A 330-amino-acid chain; its full sequence is Beta-ketoacyl-[acyl-carrier-protein] synthase III (330 aa).

Residues Cys111 and His249 contribute to the active site. Positions 250–254 (QANTR) are ACP-binding. Asn279 is a catalytic residue.

Belongs to the thiolase-like superfamily. FabH family. Homodimer.

Its subcellular location is the cytoplasm. The catalysed reaction is malonyl-[ACP] + acetyl-CoA + H(+) = 3-oxobutanoyl-[ACP] + CO2 + CoA. The protein operates within lipid metabolism; fatty acid biosynthesis. Its function is as follows. Catalyzes the condensation reaction of fatty acid synthesis by the addition to an acyl acceptor of two carbons from malonyl-ACP. Catalyzes the first condensation reaction which initiates fatty acid synthesis and may therefore play a role in governing the total rate of fatty acid production. Possesses both acetoacetyl-ACP synthase and acetyl transacylase activities. Its substrate specificity determines the biosynthesis of branched-chain and/or straight-chain of fatty acids. The polypeptide is Beta-ketoacyl-[acyl-carrier-protein] synthase III (Pseudomonas aeruginosa (strain LESB58)).